Here is a 63-residue protein sequence, read N- to C-terminus: Beta-defensin 5 (63 aa).

The N-terminal stretch at 1–22 (MRIHYLLFSFLLVLLSPLSVFT) is a signal peptide. Residue Gln-23 is modified to Pyrrolidone carboxylic acid. Disulfide bonds link Cys-31-Cys-59, Cys-38-Cys-52, and Cys-42-Cys-60.

It belongs to the beta-defensin family.

The protein localises to the secreted. Its function is as follows. Has antibacterial activity. The sequence is that of Beta-defensin 5 (Defb5) from Rattus norvegicus (Rat).